The sequence spans 298 residues: Probable endonuclease 4 (298 aa).

9 residues coordinate Zn(2+): histidine 69, histidine 111, glutamate 146, aspartate 180, histidine 183, histidine 215, aspartate 228, histidine 230, and glutamate 260.

It belongs to the AP endonuclease 2 family. Zn(2+) is required as a cofactor.

It carries out the reaction Endonucleolytic cleavage to 5'-phosphooligonucleotide end-products.. In terms of biological role, endonuclease IV plays a role in DNA repair. It cleaves phosphodiester bonds at apurinic or apyrimidinic (AP) sites, generating a 3'-hydroxyl group and a 5'-terminal sugar phosphate. The chain is Probable endonuclease 4 from Bacillus cereus (strain 03BB102).